The chain runs to 166 residues: Protein-export protein SecB (166 aa).

Belongs to the SecB family. Homotetramer, a dimer of dimers. One homotetramer interacts with 1 SecA dimer.

It localises to the cytoplasm. Its function is as follows. One of the proteins required for the normal export of preproteins out of the cell cytoplasm. It is a molecular chaperone that binds to a subset of precursor proteins, maintaining them in a translocation-competent state. It also specifically binds to its receptor SecA. This Rhizorhabdus wittichii (strain DSM 6014 / CCUG 31198 / JCM 15750 / NBRC 105917 / EY 4224 / RW1) (Sphingomonas wittichii) protein is Protein-export protein SecB.